The chain runs to 476 residues: Argininosuccinate lyase (476 aa).

Belongs to the lyase 1 family. Argininosuccinate lyase subfamily.

Its subcellular location is the cytoplasm. It carries out the reaction 2-(N(omega)-L-arginino)succinate = fumarate + L-arginine. It participates in amino-acid biosynthesis; L-arginine biosynthesis; L-arginine from L-ornithine and carbamoyl phosphate: step 3/3. The chain is Argininosuccinate lyase from Nitrosospira multiformis (strain ATCC 25196 / NCIMB 11849 / C 71).